Here is a 188-residue protein sequence, read N- to C-terminus: Elongation factor P (188 aa).

The protein belongs to the elongation factor P family.

Its subcellular location is the cytoplasm. It participates in protein biosynthesis; polypeptide chain elongation. Functionally, involved in peptide bond synthesis. Stimulates efficient translation and peptide-bond synthesis on native or reconstituted 70S ribosomes in vitro. Probably functions indirectly by altering the affinity of the ribosome for aminoacyl-tRNA, thus increasing their reactivity as acceptors for peptidyl transferase. This Gemmatimonas aurantiaca (strain DSM 14586 / JCM 11422 / NBRC 100505 / T-27) protein is Elongation factor P.